We begin with the raw amino-acid sequence, 466 residues long: Ribulose bisphosphate carboxylase large chain (466 aa).

Lys-5 carries the N6,N6,N6-trimethyllysine modification. 2 residues coordinate substrate: Asn-114 and Thr-164. The active-site Proton acceptor is the Lys-166. Position 168 (Lys-168) interacts with substrate. Mg(2+) contacts are provided by Lys-192, Asp-194, and Glu-195. Position 192 is an N6-carboxylysine (Lys-192). His-285 acts as the Proton acceptor in catalysis. Substrate-binding residues include Arg-286, His-318, and Ser-370.

The protein belongs to the RuBisCO large chain family. Type I subfamily. In terms of assembly, heterohexadecamer of 8 large chains and 8 small chains; disulfide-linked. The disulfide link is formed within the large subunit homodimers. It depends on Mg(2+) as a cofactor. In terms of processing, the disulfide bond which can form in the large chain dimeric partners within the hexadecamer appears to be associated with oxidative stress and protein turnover.

It localises to the plastid. It is found in the chloroplast. The catalysed reaction is 2 (2R)-3-phosphoglycerate + 2 H(+) = D-ribulose 1,5-bisphosphate + CO2 + H2O. It carries out the reaction D-ribulose 1,5-bisphosphate + O2 = 2-phosphoglycolate + (2R)-3-phosphoglycerate + 2 H(+). In terms of biological role, ruBisCO catalyzes two reactions: the carboxylation of D-ribulose 1,5-bisphosphate, the primary event in carbon dioxide fixation, as well as the oxidative fragmentation of the pentose substrate in the photorespiration process. Both reactions occur simultaneously and in competition at the same active site. This chain is Ribulose bisphosphate carboxylase large chain, found in Bixa orellana (Lipstick tree).